Reading from the N-terminus, the 232-residue chain is MSCSKSVIKEEMLIDLHLEGTFNGHYFEIKGKGKGQPNEGTNTVTLEVTKGGPLPFGWHILCPQFQYGNKAFVHHPDNIHDYLKLSFPEGYTWERSMHFEDGGLCCITNDISLTGNCFYYDIKFTGLNFPPNGPVVQKKTTGWEPSTERLYPRDGVLIGDIHHALTVEGGGHYACDIKTVYRAKKAALKMPGYHYVDTKLVIWNNDKEFMKVEEHEIAVARHHPFYEPKKDK.

Residues Gln-66 to Gly-68 constitute a cross-link (2-iminomethyl-5-imidazolinone (Gln-Gly)). Residue Tyr-67 is modified to 2,3-didehydrotyrosine.

It belongs to the GFP family. Post-translationally, contains a chromophore consisting of modified amino acid residues. The chromophore is formed by autocatalytic backbone condensation between Xaa-N and Gly-(N+2), oxidation of Tyr-(N+1) to didehydrotyrosine, and formation of a double bond to the alpha-amino nitrogen of residue Xaa-N. Maturation of the chromophore requires nothing other than molecular oxygen. The precise stereochemistry of the tyrosine has not been determined. As to expression, oral disk.

Functionally, pigment protein that is green in color. The sequence is that of GFP-like fluorescent chromoprotein dsFP483 from Discosoma striata (Striped mushroom).